The chain runs to 201 residues: Probable nicotinate-nucleotide adenylyltransferase (201 aa).

This sequence belongs to the NadD family.

The enzyme catalyses nicotinate beta-D-ribonucleotide + ATP + H(+) = deamido-NAD(+) + diphosphate. It functions in the pathway cofactor biosynthesis; NAD(+) biosynthesis; deamido-NAD(+) from nicotinate D-ribonucleotide: step 1/1. Functionally, catalyzes the reversible adenylation of nicotinate mononucleotide (NaMN) to nicotinic acid adenine dinucleotide (NaAD). In Clostridium botulinum (strain ATCC 19397 / Type A), this protein is Probable nicotinate-nucleotide adenylyltransferase.